The following is a 314-amino-acid chain: uncharacterized protein (314 aa).

A signal peptide spans 1–18; it reads MKVSLLIFLIILVGVIKS. N-linked (GlcNAc...) asparagine glycans are attached at residues asparagine 43, asparagine 96, asparagine 109, asparagine 116, asparagine 117, and asparagine 161. A disordered region spans residues 252–314; that stretch reads SMRITKNNPH…PKSIDFHHLF (63 aa). Composition is skewed to low complexity over residues 257-268 and 285-296; these read KNNPHLNNNNNN and KTTTKTSTKTTS.

It localises to the secreted. This is an uncharacterized protein from Dictyostelium discoideum (Social amoeba).